The chain runs to 196 residues: Glycerol-3-phosphate acyltransferase (196 aa).

The next 5 helical transmembrane spans lie at 1–21 (MIILAALLAYILGSVPFGYLT), 53–73 (AITAIGDVGKGMLAVYIGSLL), 78–98 (GALVASFFVVIGHAYSIFLKF), 112–132 (IMTSIKVTVVVFFIWLTVMLI), and 152–172 (LLFGLDLSYIYLGIFLAVMIF).

This sequence belongs to the PlsY family. Probably interacts with PlsX.

The protein localises to the cell membrane. It catalyses the reaction an acyl phosphate + sn-glycerol 3-phosphate = a 1-acyl-sn-glycero-3-phosphate + phosphate. It participates in lipid metabolism; phospholipid metabolism. Its function is as follows. Catalyzes the transfer of an acyl group from acyl-phosphate (acyl-PO(4)) to glycerol-3-phosphate (G3P) to form lysophosphatidic acid (LPA). This enzyme utilizes acyl-phosphate as fatty acyl donor, but not acyl-CoA or acyl-ACP. The polypeptide is Glycerol-3-phosphate acyltransferase (Carboxydothermus hydrogenoformans (strain ATCC BAA-161 / DSM 6008 / Z-2901)).